The sequence spans 467 residues: Asparagine--tRNA ligase (467 aa).

It belongs to the class-II aminoacyl-tRNA synthetase family. In terms of assembly, homodimer.

The protein resides in the cytoplasm. It carries out the reaction tRNA(Asn) + L-asparagine + ATP = L-asparaginyl-tRNA(Asn) + AMP + diphosphate + H(+). The polypeptide is Asparagine--tRNA ligase (Bacteroides fragilis (strain YCH46)).